Consider the following 393-residue polypeptide: Probable RNA methyltransferase sce3898 (393 aa).

The Proton acceptor role is filled by glutamate 82. The Radical SAM core domain maps to 90–329 (RPGRYSACVS…VRSARLDAFR (240 aa)). Cysteine 97 and cysteine 353 are disulfide-bonded. Residues cysteine 104, cysteine 108, and cysteine 111 each coordinate [4Fe-4S] cluster. Residues 157–158 (GE), 212–214 (SLG), and asparagine 294 each bind S-adenosyl-L-methionine. The active-site S-methylcysteine intermediate is the cysteine 353. The interval 357-393 (ARPSAEAQRPGGRRAPPRPGATAGAADVGPSAPPRPA) is disordered. The span at 373 to 382 (PRPGATAGAA) shows a compositional bias: low complexity.

It belongs to the radical SAM superfamily. RlmN family. The cofactor is [4Fe-4S] cluster.

The protein localises to the cytoplasm. The sequence is that of Probable RNA methyltransferase sce3898 from Sorangium cellulosum (strain So ce56) (Polyangium cellulosum (strain So ce56)).